We begin with the raw amino-acid sequence, 181 residues long: Probable pyruvoyl-dependent arginine decarboxylase (181 aa).

Pyruvic acid (Ser) is present on Ser43.

The protein belongs to the PdaD family. Requires pyruvate as cofactor.

The catalysed reaction is L-arginine + H(+) = agmatine + CO2. This chain is Probable pyruvoyl-dependent arginine decarboxylase, found in Chlorobium luteolum (strain DSM 273 / BCRC 81028 / 2530) (Pelodictyon luteolum).